A 201-amino-acid polypeptide reads, in one-letter code: 3-isopropylmalate dehydratase small subunit (201 aa).

Belongs to the LeuD family. LeuD type 1 subfamily. Heterodimer of LeuC and LeuD.

It catalyses the reaction (2R,3S)-3-isopropylmalate = (2S)-2-isopropylmalate. The protein operates within amino-acid biosynthesis; L-leucine biosynthesis; L-leucine from 3-methyl-2-oxobutanoate: step 2/4. Catalyzes the isomerization between 2-isopropylmalate and 3-isopropylmalate, via the formation of 2-isopropylmaleate. The polypeptide is 3-isopropylmalate dehydratase small subunit (Brucella anthropi (strain ATCC 49188 / DSM 6882 / CCUG 24695 / JCM 21032 / LMG 3331 / NBRC 15819 / NCTC 12168 / Alc 37) (Ochrobactrum anthropi)).